The chain runs to 302 residues: Ribosomal RNA small subunit methyltransferase A (302 aa).

Residues asparagine 27, leucine 29, glycine 54, glutamate 75, aspartate 100, and asparagine 138 each contribute to the S-adenosyl-L-methionine site.

The protein belongs to the class I-like SAM-binding methyltransferase superfamily. rRNA adenine N(6)-methyltransferase family. RsmA subfamily.

It localises to the cytoplasm. It catalyses the reaction adenosine(1518)/adenosine(1519) in 16S rRNA + 4 S-adenosyl-L-methionine = N(6)-dimethyladenosine(1518)/N(6)-dimethyladenosine(1519) in 16S rRNA + 4 S-adenosyl-L-homocysteine + 4 H(+). Functionally, specifically dimethylates two adjacent adenosines (A1518 and A1519) in the loop of a conserved hairpin near the 3'-end of 16S rRNA in the 30S particle. May play a critical role in biogenesis of 30S subunits. The protein is Ribosomal RNA small subunit methyltransferase A of Natranaerobius thermophilus (strain ATCC BAA-1301 / DSM 18059 / JW/NM-WN-LF).